We begin with the raw amino-acid sequence, 77 residues long: Exodeoxyribonuclease 7 small subunit (77 aa).

The protein belongs to the XseB family. In terms of assembly, heterooligomer composed of large and small subunits.

It localises to the cytoplasm. It catalyses the reaction Exonucleolytic cleavage in either 5'- to 3'- or 3'- to 5'-direction to yield nucleoside 5'-phosphates.. Functionally, bidirectionally degrades single-stranded DNA into large acid-insoluble oligonucleotides, which are then degraded further into small acid-soluble oligonucleotides. The protein is Exodeoxyribonuclease 7 small subunit of Carboxydothermus hydrogenoformans (strain ATCC BAA-161 / DSM 6008 / Z-2901).